The primary structure comprises 409 residues: Putative competence-damage inducible protein (409 aa).

The protein belongs to the CinA family.

This chain is Putative competence-damage inducible protein, found in Clostridium tetani (strain Massachusetts / E88).